A 495-amino-acid chain; its full sequence is Glutamyl-tRNA(Gln) amidotransferase subunit A (495 aa).

Catalysis depends on charge relay system residues Lys-78 and Ser-158. Ser-182 functions as the Acyl-ester intermediate in the catalytic mechanism.

This sequence belongs to the amidase family. GatA subfamily. Heterotrimer of A, B and C subunits.

The enzyme catalyses L-glutamyl-tRNA(Gln) + L-glutamine + ATP + H2O = L-glutaminyl-tRNA(Gln) + L-glutamate + ADP + phosphate + H(+). Functionally, allows the formation of correctly charged Gln-tRNA(Gln) through the transamidation of misacylated Glu-tRNA(Gln) in organisms which lack glutaminyl-tRNA synthetase. The reaction takes place in the presence of glutamine and ATP through an activated gamma-phospho-Glu-tRNA(Gln). The sequence is that of Glutamyl-tRNA(Gln) amidotransferase subunit A from Dinoroseobacter shibae (strain DSM 16493 / NCIMB 14021 / DFL 12).